The sequence spans 222 residues: Formimidoylglutamase (222 aa).

6 residues coordinate Mn(2+): histidine 34, aspartate 59, histidine 61, aspartate 63, aspartate 150, and aspartate 152.

Belongs to the arginase family. Mn(2+) serves as cofactor.

The catalysed reaction is N-formimidoyl-L-glutamate + H2O = formamide + L-glutamate. The protein operates within amino-acid degradation; L-histidine degradation into L-glutamate; L-glutamate from N-formimidoyl-L-glutamate (hydrolase route): step 1/1. In terms of biological role, catalyzes the conversion of N-formimidoyl-L-glutamate to L-glutamate and formamide. In Klebsiella aerogenes (Enterobacter aerogenes), this protein is Formimidoylglutamase (hutG).